We begin with the raw amino-acid sequence, 316 residues long: Glutathione synthetase (316 aa).

The 187-residue stretch at 123–309 (NEKISTLSFK…ISGILLDSIE (187 aa)) folds into the ATP-grasp domain. Position 149–206 (149–206 (FQEKFGDIILKPINKMGGDSVFYVKKNDPNVSVIIDQLTNYGNSFCLIQEYIKEILNG)) interacts with ATP. The Mg(2+) site is built by Glu280 and Asn282.

Belongs to the prokaryotic GSH synthase family. The cofactor is Mg(2+). Requires Mn(2+) as cofactor.

The catalysed reaction is gamma-L-glutamyl-L-cysteine + glycine + ATP = glutathione + ADP + phosphate + H(+). It participates in sulfur metabolism; glutathione biosynthesis; glutathione from L-cysteine and L-glutamate: step 2/2. The sequence is that of Glutathione synthetase from Wigglesworthia glossinidia brevipalpis.